Consider the following 196-residue polypeptide: FKBP-type peptidyl-prolyl cis-trans isomerase SlyD (196 aa).

Residues 1–69 are PPIase first part; that stretch reads MKVAKDLVVS…VAVGANDAYG (69 aa). One can recognise a PPIase FKBP-type domain in the interval 1–95; it reads MKVAKDLVVS…GVDELQVGMR (95 aa). Positions 76–120 are IF-chaperone; sequence VQRVPKDVFMGVDELQVGMRFLAETDQGPVPVEITAVEDDHVVVD. The tract at residues 129 to 151 is PPIase second part; it reads NLKFNVEVVAIREATEEELAHGH. Residues cysteine 167, cysteine 168, cysteine 184, cysteine 185, cysteine 193, and cysteine 195 each contribute to the Ni(2+) site.

The protein belongs to the FKBP-type PPIase family. In terms of assembly, monomer. Binds to a broad range of unrelated Tat signal sequences. Interacts with the hydrogenase nickel incorporation protein HypB.

Its subcellular location is the cytoplasm. It carries out the reaction [protein]-peptidylproline (omega=180) = [protein]-peptidylproline (omega=0). In terms of biological role, folding helper with both chaperone and peptidyl-prolyl cis-trans isomerase (PPIase) activities. Chaperone activity prevents aggregation of unfolded or partially folded proteins and promotes their correct folding. PPIases catalyze the cis-trans isomerization of Xaa-Pro bonds of peptides, which accelerates slow steps of protein folding and thus shortens the lifetime of intermediates. Both strategies lower the concentration of intermediates and increase the productivity and yield of the folding reaction. SlyD could be involved in Tat-dependent translocation, by binding to the Tat-type signal of folded proteins. Its function is as follows. Also involved in hydrogenase metallocenter assembly, probably by participating in the nickel insertion step. This function in hydrogenase biosynthesis requires chaperone activity and the presence of the metal-binding domain, but not PPIase activity. This Escherichia coli O157:H7 protein is FKBP-type peptidyl-prolyl cis-trans isomerase SlyD (slyD).